The sequence spans 446 residues: sn-2 acyl-lipid omega-3 desaturase (ferredoxin), chloroplastic (446 aa).

A chloroplast-targeting transit peptide spans 1-65; the sequence is MANLVLSECG…DGFTRNWALN (65 aa). A run of 2 helical transmembrane segments spans residues 118 to 138 and 141 to 161; these read LSYV…AAYL and WIVW…LFVL. Positions 163 to 167 match the Histidine box-1 motif; it reads HDCGH. A Histidine box-2 motif is present at residues 199–203; it reads HRTHH. 3 consecutive transmembrane segments (helical) span residues 231–250, 279–299, and 302–322; these read RFFR…YLWA, TACW…IGPI, and LKLY…VTYL. The short motif at 366–370 is the Histidine box-3 element; sequence HVIHH.

Belongs to the fatty acid desaturase type 1 family. As to expression, most abundant in leaves and seedlings.

The protein resides in the plastid. The protein localises to the chloroplast inner membrane. It catalyses the reaction a (7Z,10Z)-hexadecadienoyl-containing glycerolipid + 2 reduced [2Fe-2S]-[ferredoxin] + O2 + 2 H(+) = a (7Z,10Z,13Z)-hexadecatrienoyl-containing glycerolipid + 2 oxidized [2Fe-2S]-[ferredoxin] + 2 H2O. It carries out the reaction a (9Z,12Z)-octadecadienoyl-containing glycerolipid + 2 reduced [2Fe-2S]-[ferredoxin] + O2 + 2 H(+) = (9Z,12Z,15Z)-octadecatrienoyl-containing glycerolipid + 2 oxidized [2Fe-2S]-[ferredoxin] + 2 H2O. It functions in the pathway lipid metabolism; polyunsaturated fatty acid biosynthesis. Its function is as follows. Chloroplast omega-3 fatty acid desaturase introduces the third double bond in the biosynthesis of 16:3 and 18:3 fatty acids, important constituents of plant membranes. It is thought to use ferredoxin as an electron donor and to act on fatty acids esterified to galactolipids, sulfolipids and phosphatidylglycerol. This Arabidopsis thaliana (Mouse-ear cress) protein is sn-2 acyl-lipid omega-3 desaturase (ferredoxin), chloroplastic.